We begin with the raw amino-acid sequence, 352 residues long: Holliday junction branch migration complex subunit RuvB (352 aa).

Residues 1–26 form a disordered region; sequence MIETDKLRAAAPERLISPQPADRQED. A large ATPase domain (RuvB-L) region spans residues 4–193; it reads TDKLRAAAPE…FGIVSRLEFY (190 aa). ATP is bound by residues Leu32, Arg33, Gly74, Lys77, Thr78, Thr79, 140–142, Arg183, Tyr193, and Arg230; that span reads EDF. Residue Thr78 coordinates Mg(2+). A small ATPAse domain (RuvB-S) region spans residues 194 to 264; that stretch reads TPDELGFIVS…VADAALRMLD (71 aa). Residues 267-352 are head domain (RuvB-H); the sequence is SLGLDLMDRK…RPGGTDLFGG (86 aa). Residues Arg322 and Arg327 each contribute to the DNA site.

Belongs to the RuvB family. Homohexamer. Forms an RuvA(8)-RuvB(12)-Holliday junction (HJ) complex. HJ DNA is sandwiched between 2 RuvA tetramers; dsDNA enters through RuvA and exits via RuvB. An RuvB hexamer assembles on each DNA strand where it exits the tetramer. Each RuvB hexamer is contacted by two RuvA subunits (via domain III) on 2 adjacent RuvB subunits; this complex drives branch migration. In the full resolvosome a probable DNA-RuvA(4)-RuvB(12)-RuvC(2) complex forms which resolves the HJ.

It is found in the cytoplasm. The enzyme catalyses ATP + H2O = ADP + phosphate + H(+). In terms of biological role, the RuvA-RuvB-RuvC complex processes Holliday junction (HJ) DNA during genetic recombination and DNA repair, while the RuvA-RuvB complex plays an important role in the rescue of blocked DNA replication forks via replication fork reversal (RFR). RuvA specifically binds to HJ cruciform DNA, conferring on it an open structure. The RuvB hexamer acts as an ATP-dependent pump, pulling dsDNA into and through the RuvAB complex. RuvB forms 2 homohexamers on either side of HJ DNA bound by 1 or 2 RuvA tetramers; 4 subunits per hexamer contact DNA at a time. Coordinated motions by a converter formed by DNA-disengaged RuvB subunits stimulates ATP hydrolysis and nucleotide exchange. Immobilization of the converter enables RuvB to convert the ATP-contained energy into a lever motion, pulling 2 nucleotides of DNA out of the RuvA tetramer per ATP hydrolyzed, thus driving DNA branch migration. The RuvB motors rotate together with the DNA substrate, which together with the progressing nucleotide cycle form the mechanistic basis for DNA recombination by continuous HJ branch migration. Branch migration allows RuvC to scan DNA until it finds its consensus sequence, where it cleaves and resolves cruciform DNA. The chain is Holliday junction branch migration complex subunit RuvB from Azoarcus sp. (strain BH72).